A 700-amino-acid polypeptide reads, in one-letter code: Auxin response factor 18 (700 aa).

Positions 128–230 form a DNA-binding region, TF-B3; that stretch reads FAKTLTQSDA…DLCVGIRRAK (103 aa). 2 disordered regions span residues 234–254 and 560–595; these read VGGP…AAGG and VKKS…DNLS. Residues 239 to 250 are compositionally biased toward pro residues; sequence FLPPPPPPPPTP. Residues 565 to 594 show a composition bias toward polar residues; it reads SDGNAENTVNKSNSDVSSPRSNQNGTTDNL. One can recognise a PB1 domain in the interval 614–697; sequence TGHCKVFMQS…NILTDTSGDN (84 aa).

Belongs to the ARF family. As to quaternary structure, homodimers and heterodimers. Expressed in roots, culms, leaves and young panicles.

Its subcellular location is the nucleus. Its function is as follows. Auxin response factors (ARFs) are transcriptional factors that bind specifically to the DNA sequence 5'-TGTCTC-3' found in the auxin-responsive promoter elements (AuxREs). The protein is Auxin response factor 18 (ARF18) of Oryza sativa subsp. japonica (Rice).